Here is a 199-residue protein sequence, read N- to C-terminus: Ciliary neurotrophic factor (199 aa).

The protein belongs to the CNTF family. In terms of tissue distribution, nervous system.

Its subcellular location is the cytoplasm. Functionally, CNTF is a survival factor for various neuronal cell types. Seems to prevent the degeneration of motor axons after axotomy. This is Ciliary neurotrophic factor (CNTF) from Oryctolagus cuniculus (Rabbit).